Consider the following 102-residue polypeptide: Protein Tat (102 aa).

Positions 1-24 (MEPVDPRLEPWKHPGSQPKTACNN) are interaction with human CREBBP. Residues 1-48 (MEPVDPRLEPWKHPGSQPKTACNNCYCKKCCYHCQVCFLTKGLGISYG) are transactivation. Zn(2+) contacts are provided by Cys-22, Cys-25, and Cys-27. A cysteine-rich region spans residues 22–37 (CNNCYCKKCCYHCQVC). Lys-28 is subject to N6-acetyllysine; by host PCAF. Zn(2+) is bound by residues Cys-30, His-33, Cys-34, and Cys-37. Residues 38–48 (FLTKGLGISYG) are core. A disordered region spans residues 48–102 (GRKKRRQRRGPPQGSQTHQVSLSKQPTSQPRGDPTGPKESKEKVERETETDPAVQ). The Nuclear localization signal, RNA-binding (TAR), and protein transduction signature appears at 49–57 (RKKRRQRRG). An interaction with the host capping enzyme RNGTT region spans residues 49-86 (RKKRRQRRGPPQGSQTHQVSLSKQPTSQPRGDPTGPKE). N6-acetyllysine; by host EP300 and GCN5L2 is present on residues Lys-50 and Lys-51. Asymmetric dimethylarginine; by host PRMT6 is present on residues Arg-52 and Arg-53. The span at 62-77 (SQTHQVSLSKQPTSQP) shows a compositional bias: polar residues. Lys-71 is covalently cross-linked (Glycyl lysine isopeptide (Lys-Gly) (interchain with G-Cter in ubiquitin)). Residues 78–80 (RGD) carry the Cell attachment site motif. A compositionally biased stretch (basic and acidic residues) spans 83–96 (GPKESKEKVERETE).

The protein belongs to the lentiviruses Tat family. As to quaternary structure, interacts with host CCNT1. Associates with the P-TEFb complex composed at least of Tat, P-TEFb (CDK9 and CCNT1), TAR RNA, RNA Pol II. Recruits the HATs CREBBP, TAF1/TFIID, EP300, PCAF and GCN5L2. Interacts with host KAT5/Tip60; this interaction targets the latter to degradation. Interacts with the host deacetylase SIRT1. Interacts with host capping enzyme RNGTT; this interaction stimulates RNGTT. Binds to host KDR, and to the host integrins ITGAV/ITGB3 and ITGA5/ITGB1. Interacts with host KPNB1/importin beta-1 without previous binding to KPNA1/importin alpha-1. Interacts with EIF2AK2. Interacts with host nucleosome assembly protein NAP1L1; this interaction may be required for the transport of Tat within the nucleus, since the two proteins interact at the nuclear rim. Interacts with host C1QBP/SF2P32; this interaction involves lysine-acetylated Tat. Interacts with the host chemokine receptors CCR2, CCR3 and CXCR4. Interacts with host DPP4/CD26; this interaction may trigger an anti-proliferative effect. Interacts with host LDLR. Interacts with the host extracellular matrix metalloproteinase MMP1. Interacts with host PRMT6; this interaction mediates Tat's methylation. Interacts with, and is ubiquitinated by MDM2/Hdm2. Interacts with host PSMC3 and HTATIP2. Interacts with STAB1; this interaction may overcome SATB1-mediated repression of IL2 and IL2RA (interleukin) in T cells by binding to the same domain than HDAC1. Interacts (when acetylated) with human CDK13, thereby increasing HIV-1 mRNA splicing and promoting the production of the doubly spliced HIV-1 protein Nef. Interacts with host TBP; this interaction modulates the activity of transcriptional pre-initiation complex. Interacts with host RELA. Interacts with host PLSCR1; this interaction negatively regulates Tat transactivation activity by altering its subcellular distribution. Post-translationally, asymmetrical arginine methylation by host PRMT6 seems to diminish the transactivation capacity of Tat and affects the interaction with host CCNT1. In terms of processing, acetylation by EP300, CREBBP, GCN5L2/GCN5 and PCAF regulates the transactivation activity of Tat. EP300-mediated acetylation of Lys-50 promotes dissociation of Tat from the TAR RNA through the competitive binding to PCAF's bromodomain. In addition, the non-acetylated Tat's N-terminus can also interact with PCAF. PCAF-mediated acetylation of Lys-28 enhances Tat's binding to CCNT1. Lys-50 is deacetylated by SIRT1. Polyubiquitination by host MDM2 does not target Tat to degradation, but activates its transactivation function and fosters interaction with CCNT1 and TAR RNA. Post-translationally, phosphorylated by EIF2AK2 on serine and threonine residues adjacent to the basic region important for TAR RNA binding and function. Phosphorylation of Tat by EIF2AK2 is dependent on the prior activation of EIF2AK2 by dsRNA.

The protein localises to the host nucleus. Its subcellular location is the host nucleolus. It is found in the host cytoplasm. It localises to the secreted. Its function is as follows. Transcriptional activator that increases RNA Pol II processivity, thereby increasing the level of full-length viral transcripts. Recognizes a hairpin structure at the 5'-LTR of the nascent viral mRNAs referred to as the transactivation responsive RNA element (TAR) and recruits the cyclin T1-CDK9 complex (P-TEFb complex) that will in turn hyperphosphorylate the RNA polymerase II to allow efficient elongation. The CDK9 component of P-TEFb and other Tat-activated kinases hyperphosphorylate the C-terminus of RNA Pol II that becomes stabilized and much more processive. Other factors such as HTATSF1/Tat-SF1, SUPT5H/SPT5, and HTATIP2 are also important for Tat's function. Besides its effect on RNA Pol II processivity, Tat induces chromatin remodeling of proviral genes by recruiting the histone acetyltransferases (HATs) CREBBP, EP300 and PCAF to the chromatin. This also contributes to the increase in proviral transcription rate, especially when the provirus integrates in transcriptionally silent region of the host genome. To ensure maximal activation of the LTR, Tat mediates nuclear translocation of NF-kappa-B by interacting with host RELA. Through its interaction with host TBP, Tat may also modulate transcription initiation. Tat can reactivate a latently infected cell by penetrating in it and transactivating its LTR promoter. In the cytoplasm, Tat is thought to act as a translational activator of HIV-1 mRNAs. Extracellular circulating Tat can be endocytosed by surrounding uninfected cells via the binding to several surface receptors such as CD26, CXCR4, heparan sulfate proteoglycans (HSPG) or LDLR. Neurons are rarely infected, but they internalize Tat via their LDLR. Through its interaction with nuclear HATs, Tat is potentially able to control the acetylation-dependent cellular gene expression. Modulates the expression of many cellular genes involved in cell survival, proliferation or in coding for cytokines or cytokine receptors. Tat plays a role in T-cell and neurons apoptosis. Tat induced neurotoxicity and apoptosis probably contribute to neuroAIDS. Circulating Tat also acts as a chemokine-like and/or growth factor-like molecule that binds to specific receptors on the surface of the cells, affecting many cellular pathways. In the vascular system, Tat binds to ITGAV/ITGB3 and ITGA5/ITGB1 integrins dimers at the surface of endothelial cells and competes with bFGF for heparin-binding sites, leading to an excess of soluble bFGF. The sequence is that of Protein Tat from Human immunodeficiency virus type 1 group M subtype B (isolate RF/HAT3) (HIV-1).